The sequence spans 283 residues: Phosphatidylglycerol--prolipoprotein diacylglyceryl transferase (283 aa).

7 consecutive transmembrane segments (helical) span residues leucine 18–glycine 38, leucine 59–tyrosine 79, isoleucine 91–alanine 111, isoleucine 124–leucine 144, threonine 185–tryptophan 205, tyrosine 213–glutamate 233, and glycine 251–isoleucine 271. Arginine 143 is a binding site for a 1,2-diacyl-sn-glycero-3-phospho-(1'-sn-glycerol).

The protein belongs to the Lgt family.

The protein localises to the cell inner membrane. The enzyme catalyses L-cysteinyl-[prolipoprotein] + a 1,2-diacyl-sn-glycero-3-phospho-(1'-sn-glycerol) = an S-1,2-diacyl-sn-glyceryl-L-cysteinyl-[prolipoprotein] + sn-glycerol 1-phosphate + H(+). It participates in protein modification; lipoprotein biosynthesis (diacylglyceryl transfer). In terms of biological role, catalyzes the transfer of the diacylglyceryl group from phosphatidylglycerol to the sulfhydryl group of the N-terminal cysteine of a prolipoprotein, the first step in the formation of mature lipoproteins. In Porphyromonas gingivalis (strain ATCC 33277 / DSM 20709 / CIP 103683 / JCM 12257 / NCTC 11834 / 2561), this protein is Phosphatidylglycerol--prolipoprotein diacylglyceryl transferase.